The sequence spans 218 residues: Adenylate kinase (218 aa).

ATP is bound at residue 10–15; it reads GAGKGT. The NMP stretch occupies residues 30 to 59; it reads STGDMLRAAVKAGTPLGIAAKKIMDEGGLV. AMP contacts are provided by residues Thr-31, Arg-36, 57-59, 85-88, and Gln-92; these read GLV and GFPR. The segment at 122–159 is LID; it reads GRRVHPASGRTYHVKFNPPKVAGRDDVTGEELIQRDDD. Residues Arg-123 and 132–133 contribute to the ATP site; that span reads TY. AMP is bound by residues Arg-156 and Arg-167. Gly-203 contacts ATP.

The protein belongs to the adenylate kinase family. Monomer.

Its subcellular location is the cytoplasm. It catalyses the reaction AMP + ATP = 2 ADP. It participates in purine metabolism; AMP biosynthesis via salvage pathway; AMP from ADP: step 1/1. In terms of biological role, catalyzes the reversible transfer of the terminal phosphate group between ATP and AMP. Plays an important role in cellular energy homeostasis and in adenine nucleotide metabolism. This chain is Adenylate kinase, found in Herminiimonas arsenicoxydans.